We begin with the raw amino-acid sequence, 373 residues long: Protein-glutamate methylesterase/protein-glutamine glutaminase 1 (373 aa).

The region spanning 16-133 (RVVVVDDSAL…ASGLTELSDQ (118 aa)) is the Response regulatory domain. Residue Asp67 is modified to 4-aspartylphosphate. Residues 175-367 (RVSTEKLICI…PALIAKLSSA (193 aa)) enclose the CheB-type methylesterase domain. Active-site residues include Ser187, His213, and Asp309.

This sequence belongs to the CheB family. Post-translationally, phosphorylated by CheA. Phosphorylation of the N-terminal regulatory domain activates the methylesterase activity.

The protein resides in the cytoplasm. The enzyme catalyses [protein]-L-glutamate 5-O-methyl ester + H2O = L-glutamyl-[protein] + methanol + H(+). The catalysed reaction is L-glutaminyl-[protein] + H2O = L-glutamyl-[protein] + NH4(+). Functionally, involved in chemotaxis. Part of a chemotaxis signal transduction system that modulates chemotaxis in response to various stimuli. Catalyzes the demethylation of specific methylglutamate residues introduced into the chemoreceptors (methyl-accepting chemotaxis proteins or MCP) by CheR. Also mediates the irreversible deamidation of specific glutamine residues to glutamic acid. The sequence is that of Protein-glutamate methylesterase/protein-glutamine glutaminase 1 from Albidiferax ferrireducens (strain ATCC BAA-621 / DSM 15236 / T118) (Rhodoferax ferrireducens).